Reading from the N-terminus, the 254-residue chain is 4-hydroxy-tetrahydrodipicolinate reductase (254 aa).

8–13 (GAFGRM) provides a ligand contact to NAD(+). Lys-36 contributes to the NADP(+) binding site. Residues 89 to 91 (GTT) and 115 to 118 (STNY) contribute to the NAD(+) site. Catalysis depends on His-147, which acts as the Proton donor/acceptor. (S)-2,3,4,5-tetrahydrodipicolinate is bound at residue His-148. Lys-151 functions as the Proton donor in the catalytic mechanism. 157–158 (GT) provides a ligand contact to (S)-2,3,4,5-tetrahydrodipicolinate.

The protein belongs to the DapB family.

The protein resides in the cytoplasm. It carries out the reaction (S)-2,3,4,5-tetrahydrodipicolinate + NAD(+) + H2O = (2S,4S)-4-hydroxy-2,3,4,5-tetrahydrodipicolinate + NADH + H(+). It catalyses the reaction (S)-2,3,4,5-tetrahydrodipicolinate + NADP(+) + H2O = (2S,4S)-4-hydroxy-2,3,4,5-tetrahydrodipicolinate + NADPH + H(+). It participates in amino-acid biosynthesis; L-lysine biosynthesis via DAP pathway; (S)-tetrahydrodipicolinate from L-aspartate: step 4/4. Catalyzes the conversion of 4-hydroxy-tetrahydrodipicolinate (HTPA) to tetrahydrodipicolinate. The polypeptide is 4-hydroxy-tetrahydrodipicolinate reductase (Methanospirillum hungatei JF-1 (strain ATCC 27890 / DSM 864 / NBRC 100397 / JF-1)).